The primary structure comprises 647 residues: Carotenoid phi-ring synthase (647 aa).

Residues Ala-67, 86–87 (EA), Lys-94, and Tyr-120 contribute to the FAD site. Residues 322–416 (VASIPKREVP…VREAGEMLVI (95 aa)) enclose the Rieske domain. The [2Fe-2S] cluster site is built by Cys-362, His-364, Cys-380, and His-383. Asp-601 and Met-612 together coordinate FAD.

It belongs to the carotenoid/retinoid oxidoreductase family. Requires FAD as cofactor. The cofactor is [2Fe-2S] cluster.

The catalysed reaction is a carotenoid beta-end derivative + 2 A = a carotenoid phi-end derivative + 2 AH2. The protein operates within carotenoid biosynthesis. Functionally, involved in the biosynthesis of chlorobactene, a carotenoid with aromatic end group. Catalyzes the introduction of two additional double bonds into the ionone ring of gamma-carotene to produce chlorobactene. The reaction includes an intramolecular methyl transfer from position C1 to position C2 of the ring. The polypeptide is Carotenoid phi-ring synthase (Chlorobaculum tepidum (strain ATCC 49652 / DSM 12025 / NBRC 103806 / TLS) (Chlorobium tepidum)).